The sequence spans 221 residues: uncharacterized protein (221 aa).

This is an uncharacterized protein from Acanthamoeba polyphaga (Amoeba).